Consider the following 381-residue polypeptide: Dynactin subunit 2 (381 aa).

Residues 15 to 39 (DQPDVYETPDAPESETSDFYDEEPA) form a disordered region. Over residues 24–39 (DAPESETSDFYDEEPA) the composition is skewed to acidic residues. 2 coiled-coil regions span residues 100 to 216 (QKCL…AVGA) and 350 to 381 (GVQE…EKVK).

This sequence belongs to the dynactin subunit 2 family. Subunit of dynactin, a multiprotein complex associated with dynein.

The protein localises to the cytoplasm. It localises to the cytoskeleton. It is found in the membrane. Functionally, modulates cytoplasmic dynein binding to an organelle, and plays a role in prometaphase chromosome alignment and spindle organization during mitosis. The sequence is that of Dynactin subunit 2 from Aedes aegypti (Yellowfever mosquito).